The sequence spans 433 residues: uncharacterized protein (433 aa).

The protein belongs to the mimivirus R160 family.

The protein localises to the virion. This is an uncharacterized protein from Acanthamoeba polyphaga mimivirus (APMV).